Consider the following 340-residue polypeptide: Fructose-1,6-bisphosphatase class 1 (340 aa).

Positions 107, 126, 128, and 129 each coordinate Mg(2+). Asn-215 lines the substrate pocket. Mg(2+) is bound at residue Glu-287.

Belongs to the FBPase class 1 family. Homotetramer. Mg(2+) is required as a cofactor.

Its subcellular location is the cytoplasm. It catalyses the reaction beta-D-fructose 1,6-bisphosphate + H2O = beta-D-fructose 6-phosphate + phosphate. The protein operates within carbohydrate biosynthesis; gluconeogenesis. The chain is Fructose-1,6-bisphosphatase class 1 from Brucella suis biovar 1 (strain 1330).